The following is a 281-amino-acid chain: 2-dehydro-3-deoxyphosphooctonate aldolase (281 aa).

Belongs to the KdsA family.

The protein localises to the cytoplasm. It catalyses the reaction D-arabinose 5-phosphate + phosphoenolpyruvate + H2O = 3-deoxy-alpha-D-manno-2-octulosonate-8-phosphate + phosphate. Its pathway is carbohydrate biosynthesis; 3-deoxy-D-manno-octulosonate biosynthesis; 3-deoxy-D-manno-octulosonate from D-ribulose 5-phosphate: step 2/3. The protein operates within bacterial outer membrane biogenesis; lipopolysaccharide biosynthesis. This Pseudomonas fluorescens (strain Pf0-1) protein is 2-dehydro-3-deoxyphosphooctonate aldolase.